We begin with the raw amino-acid sequence, 379 residues long: Probable pectin lyase A (379 aa).

An N-terminal signal peptide occupies residues 1-20 (MKYSTIFSAAAAVFAGSAAA). Disulfide bonds link Cys-83–Cys-102 and Cys-92–Cys-226. An N-linked (GlcNAc...) asparagine glycan is attached at Asn-129. Arg-256 is a catalytic residue. Cysteines 322 and 330 form a disulfide.

Belongs to the polysaccharide lyase 1 family.

The protein localises to the secreted. The catalysed reaction is Eliminative cleavage of (1-&gt;4)-alpha-D-galacturonan methyl ester to give oligosaccharides with 4-deoxy-6-O-methyl-alpha-D-galact-4-enuronosyl groups at their non-reducing ends.. In terms of biological role, pectinolytic enzymes consist of four classes of enzymes: pectin lyase, polygalacturonase, pectin methylesterase and rhamnogalacturonase. Among pectinolytic enzymes, pectin lyase is the most important in depolymerization of pectin, since it cleaves internal glycosidic bonds of highly methylated pectins. This Aspergillus niger (strain ATCC MYA-4892 / CBS 513.88 / FGSC A1513) protein is Probable pectin lyase A (pelA).